The chain runs to 95 residues: NADH-quinone oxidoreductase subunit K (95 aa).

3 helical membrane-spanning segments follow: residues 1–21 (MSYLLASALLFALGVYGVLTR), 25–45 (ILVFLSIELMLNAANLSLVGF), and 59–79 (MVIAVAAAEVAVGLGLIVAIF).

This sequence belongs to the complex I subunit 4L family. As to quaternary structure, NDH-1 is composed of 15 different subunits. Subunits NuoA, H, J, K, L, M, N constitute the membrane sector of the complex.

Its subcellular location is the cell inner membrane. It catalyses the reaction a quinone + NADH + 5 H(+)(in) = a quinol + NAD(+) + 4 H(+)(out). NDH-1 shuttles electrons from NADH, via FMN and iron-sulfur (Fe-S) centers, to quinones in the respiratory chain. The immediate electron acceptor for the enzyme in this species is believed to be a menaquinone. Couples the redox reaction to proton translocation (for every two electrons transferred, four hydrogen ions are translocated across the cytoplasmic membrane), and thus conserves the redox energy in a proton gradient. This is NADH-quinone oxidoreductase subunit K from Thermus thermophilus (strain ATCC BAA-163 / DSM 7039 / HB27).